Reading from the N-terminus, the 140-residue chain is Nucleoside diphosphate kinase (140 aa).

Residues K11, F59, R87, T93, R104, and N114 each contribute to the ATP site. H117 (pros-phosphohistidine intermediate) is an active-site residue.

This sequence belongs to the NDK family. In terms of assembly, homotetramer. The cofactor is Mg(2+).

It is found in the cytoplasm. The catalysed reaction is a 2'-deoxyribonucleoside 5'-diphosphate + ATP = a 2'-deoxyribonucleoside 5'-triphosphate + ADP. It carries out the reaction a ribonucleoside 5'-diphosphate + ATP = a ribonucleoside 5'-triphosphate + ADP. Its function is as follows. Major role in the synthesis of nucleoside triphosphates other than ATP. The ATP gamma phosphate is transferred to the NDP beta phosphate via a ping-pong mechanism, using a phosphorylated active-site intermediate. In Rickettsia felis (strain ATCC VR-1525 / URRWXCal2) (Rickettsia azadi), this protein is Nucleoside diphosphate kinase.